We begin with the raw amino-acid sequence, 185 residues long: Ribosome-recycling factor (185 aa).

It belongs to the RRF family.

The protein localises to the cytoplasm. Functionally, responsible for the release of ribosomes from messenger RNA at the termination of protein biosynthesis. May increase the efficiency of translation by recycling ribosomes from one round of translation to another. The polypeptide is Ribosome-recycling factor (Kocuria rhizophila (strain ATCC 9341 / DSM 348 / NBRC 103217 / DC2201)).